We begin with the raw amino-acid sequence, 349 residues long: ATPase GET3 (349 aa).

26-33 is a binding site for ATP; sequence KGGVGKTT. Asp-57 is a catalytic residue. ATP contacts are provided by Glu-240 and Asn-267. 2 residues coordinate Zn(2+): Cys-280 and Cys-283.

Belongs to the arsA ATPase family. As to quaternary structure, homodimer. Component of the Golgi to ER traffic (GET) complex, which is composed of GET1, GET2 and GET3. Within the complex, GET1 and GET2 form a heterotetramer which is stabilized by phosphatidylinositol binding and which binds to the GET3 homodimer. Interacts with the chloride channel protein GEF1.

The protein localises to the cytoplasm. Its subcellular location is the endoplasmic reticulum. It localises to the golgi apparatus. In terms of biological role, ATPase required for the post-translational delivery of tail-anchored (TA) proteins to the endoplasmic reticulum. Recognizes and selectively binds the transmembrane domain of TA proteins in the cytosol. This complex then targets to the endoplasmic reticulum by membrane-bound receptors GET1 and GET2, where the tail-anchored protein is released for insertion. This process is regulated by ATP binding and hydrolysis. ATP binding drives the homodimer towards the closed dimer state, facilitating recognition of newly synthesized TA membrane proteins. ATP hydrolysis is required for insertion. Subsequently, the homodimer reverts towards the open dimer state, lowering its affinity for the GET1-GET2 receptor, and returning it to the cytosol to initiate a new round of targeting. Cooperates with the HDEL receptor ERD2 to mediate the ATP-dependent retrieval of resident ER proteins that contain a C-terminal H-D-E-L retention signal from the Golgi to the ER. Involved in low-level resistance to the oxyanions arsenite and arsenate, and in heat tolerance. The polypeptide is ATPase GET3 (Kluyveromyces lactis (strain ATCC 8585 / CBS 2359 / DSM 70799 / NBRC 1267 / NRRL Y-1140 / WM37) (Yeast)).